The sequence spans 71 residues: ATP synthase subunit c (71 aa).

2 helical membrane-spanning segments follow: residues 5-25 (VLAA…IGIA) and 46-66 (FFIL…VMAF).

The protein belongs to the ATPase C chain family. As to quaternary structure, F-type ATPases have 2 components, F(1) - the catalytic core - and F(0) - the membrane proton channel. F(1) has five subunits: alpha(3), beta(3), gamma(1), delta(1), epsilon(1). F(0) has three main subunits: a(1), b(2) and c(10-14). The alpha and beta chains form an alternating ring which encloses part of the gamma chain. F(1) is attached to F(0) by a central stalk formed by the gamma and epsilon chains, while a peripheral stalk is formed by the delta and b chains.

The protein localises to the cell membrane. Functionally, f(1)F(0) ATP synthase produces ATP from ADP in the presence of a proton or sodium gradient. F-type ATPases consist of two structural domains, F(1) containing the extramembraneous catalytic core and F(0) containing the membrane proton channel, linked together by a central stalk and a peripheral stalk. During catalysis, ATP synthesis in the catalytic domain of F(1) is coupled via a rotary mechanism of the central stalk subunits to proton translocation. Key component of the F(0) channel; it plays a direct role in translocation across the membrane. A homomeric c-ring of between 10-14 subunits forms the central stalk rotor element with the F(1) delta and epsilon subunits. This Clostridium beijerinckii (strain ATCC 51743 / NCIMB 8052) (Clostridium acetobutylicum) protein is ATP synthase subunit c.